Consider the following 583-residue polypeptide: Propane 2-monooxygenase operon transcriptional activator MimR (583 aa).

A Sigma-54 factor interaction domain is found at 320–513 (LAGQSSSFRR…LRHVLTETVR (194 aa)). Residues 349–356 (ERGSGRTY) and 395–404 (SADFAVIVSD) contribute to the ATP site.

Its function is as follows. Acts as a transcriptional activator of the mimABCD operon encoding the propane 2-monooxygenase complex. In Mycolicibacterium smegmatis (strain ATCC 700084 / mc(2)155) (Mycobacterium smegmatis), this protein is Propane 2-monooxygenase operon transcriptional activator MimR.